We begin with the raw amino-acid sequence, 85 residues long: Augerpeptide-s6a (85 aa).

A signal peptide spans 1–20 (MTLTMSTVVFFSLILLTLGL). Positions 21-43 (QPKDKDEGVMGRSRLGKRGLLMR) are excised as a propeptide. Disulfide bonds link Cys54–Cys65, Cys58–Cys70, and Cys64–Cys81.

As to expression, expressed by the venom duct.

It is found in the secreted. The sequence is that of Augerpeptide-s6a from Terebra subulata (Chocolate spotted auger).